Reading from the N-terminus, the 218-residue chain is Mitochondrial import inner membrane translocase subunit TIM17-1 (218 aa).

The next 4 membrane-spanning stretches (helical) occupy residues 19 to 36 (VGGA…YHLI), 66 to 82 (FSVW…ALVY), 89 to 105 (PWNS…FLSL), and 116 to 133 (ALVG…GIML).

It belongs to the Tim17/Tim22/Tim23 family. As to quaternary structure, component of the TIM17:23 complex at least composed of TIM23, TIM17 and TIM50. The complex interacts with the TIM44 component of the PAM complex. As to expression, expressed in flowers, leaves and cotyledons, and at very low levels in roots.

The protein resides in the mitochondrion inner membrane. Its function is as follows. Essential component of the TIM17:23 complex, a complex that mediates the translocation of transit peptide-containing proteins across the mitochondrial inner membrane. Links the inner and outer membranes. In Arabidopsis thaliana (Mouse-ear cress), this protein is Mitochondrial import inner membrane translocase subunit TIM17-1 (TIM17-1).